Here is a 292-residue protein sequence, read N- to C-terminus: MNHLLDERKRRLSQFHEIIKKRPIETRPVDIPDGVFSQCEQCNSAIYNKDLEHNYEVCPYCSYHFKINAVKRLKYTLDEDTFKPLFENITSKNPLGMPEYEEKLDKGMRMAKMNEAFLAGTGKIDGQNLAIGVLDSYFMMGSMGSVVGERITRLIEHAAKHNLPLVIFSASGGARMQEGILSLMQMAKTSGALNLLDEKGLVYISVMTNPTTGGVAASFASLGDINIAEKSSLIGFAGARVIKQTIGQDLPAGFQTDAFQLQKGQVDLVVLRSQLKKTLSTLLKLHAKKVTS.

The region spanning 35–292 (VFSQCEQCNS…LKLHAKKVTS (258 aa)) is the CoA carboxyltransferase N-terminal domain. 4 residues coordinate Zn(2+): cysteine 39, cysteine 42, cysteine 58, and cysteine 61. The C4-type zinc-finger motif lies at 39-61 (CEQCNSAIYNKDLEHNYEVCPYC).

This sequence belongs to the AccD/PCCB family. Acetyl-CoA carboxylase is a heterohexamer composed of biotin carboxyl carrier protein (AccB), biotin carboxylase (AccC) and two subunits each of ACCase subunit alpha (AccA) and ACCase subunit beta (AccD). It depends on Zn(2+) as a cofactor.

The protein resides in the cytoplasm. It catalyses the reaction N(6)-carboxybiotinyl-L-lysyl-[protein] + acetyl-CoA = N(6)-biotinyl-L-lysyl-[protein] + malonyl-CoA. It participates in lipid metabolism; malonyl-CoA biosynthesis; malonyl-CoA from acetyl-CoA: step 1/1. Functionally, component of the acetyl coenzyme A carboxylase (ACC) complex. Biotin carboxylase (BC) catalyzes the carboxylation of biotin on its carrier protein (BCCP) and then the CO(2) group is transferred by the transcarboxylase to acetyl-CoA to form malonyl-CoA. This is Acetyl-coenzyme A carboxylase carboxyl transferase subunit beta from Acholeplasma laidlawii (strain PG-8A).